A 297-amino-acid chain; its full sequence is Aspartate carbamoyltransferase catalytic subunit (297 aa).

Carbamoyl phosphate-binding residues include arginine 49 and threonine 50. Lysine 77 provides a ligand contact to L-aspartate. 3 residues coordinate carbamoyl phosphate: arginine 99, histidine 129, and glutamine 132. L-aspartate contacts are provided by arginine 162 and arginine 215. Glycine 256 and proline 257 together coordinate carbamoyl phosphate.

It belongs to the aspartate/ornithine carbamoyltransferase superfamily. ATCase family. In terms of assembly, heterododecamer (2C3:3R2) of six catalytic PyrB chains organized as two trimers (C3), and six regulatory PyrI chains organized as three dimers (R2).

It carries out the reaction carbamoyl phosphate + L-aspartate = N-carbamoyl-L-aspartate + phosphate + H(+). It participates in pyrimidine metabolism; UMP biosynthesis via de novo pathway; (S)-dihydroorotate from bicarbonate: step 2/3. In terms of biological role, catalyzes the condensation of carbamoyl phosphate and aspartate to form carbamoyl aspartate and inorganic phosphate, the committed step in the de novo pyrimidine nucleotide biosynthesis pathway. The polypeptide is Aspartate carbamoyltransferase catalytic subunit (Legionella pneumophila (strain Corby)).